The following is a 303-amino-acid chain: Tyrosine recombinase XerC (303 aa).

In terms of domain architecture, Core-binding (CB) spans Ile3–Val89. In terms of domain architecture, Tyr recombinase spans Lys110 to Arg297. Active-site residues include Arg150, Lys174, His249, Arg252, and His275. Catalysis depends on Tyr284, which acts as the O-(3'-phospho-DNA)-tyrosine intermediate.

The protein belongs to the 'phage' integrase family. XerC subfamily. In terms of assembly, forms a cyclic heterotetrameric complex composed of two molecules of XerC and two molecules of XerD.

Its subcellular location is the cytoplasm. Site-specific tyrosine recombinase, which acts by catalyzing the cutting and rejoining of the recombining DNA molecules. The XerC-XerD complex is essential to convert dimers of the bacterial chromosome into monomers to permit their segregation at cell division. It also contributes to the segregational stability of plasmids. This chain is Tyrosine recombinase XerC, found in Halalkalibacterium halodurans (strain ATCC BAA-125 / DSM 18197 / FERM 7344 / JCM 9153 / C-125) (Bacillus halodurans).